The sequence spans 878 residues: Alanine--tRNA ligase (878 aa).

Positions 564, 568, 666, and 670 each coordinate Zn(2+).

Belongs to the class-II aminoacyl-tRNA synthetase family. Homotetramer. Requires Zn(2+) as cofactor.

Its subcellular location is the cytoplasm. The enzyme catalyses tRNA(Ala) + L-alanine + ATP = L-alanyl-tRNA(Ala) + AMP + diphosphate. Functionally, catalyzes the attachment of alanine to tRNA(Ala) in a two-step reaction: alanine is first activated by ATP to form Ala-AMP and then transferred to the acceptor end of tRNA(Ala). Also edits incorrectly charged Ser-tRNA(Ala) and Gly-tRNA(Ala) via its editing domain. This Buchnera aphidicola subsp. Acyrthosiphon pisum (strain APS) (Acyrthosiphon pisum symbiotic bacterium) protein is Alanine--tRNA ligase.